The primary structure comprises 211 residues: Uracil phosphoribosyltransferase (211 aa).

5-phospho-alpha-D-ribose 1-diphosphate-binding positions include arginine 78, arginine 103, and aspartate 130–threonine 138. Uracil-binding positions include isoleucine 195 and glycine 200 to alanine 202. Aspartate 201 contributes to the 5-phospho-alpha-D-ribose 1-diphosphate binding site.

This sequence belongs to the UPRTase family. Mg(2+) serves as cofactor.

It catalyses the reaction UMP + diphosphate = 5-phospho-alpha-D-ribose 1-diphosphate + uracil. The protein operates within pyrimidine metabolism; UMP biosynthesis via salvage pathway; UMP from uracil: step 1/1. With respect to regulation, allosterically activated by GTP. Catalyzes the conversion of uracil and 5-phospho-alpha-D-ribose 1-diphosphate (PRPP) to UMP and diphosphate. This Renibacterium salmoninarum (strain ATCC 33209 / DSM 20767 / JCM 11484 / NBRC 15589 / NCIMB 2235) protein is Uracil phosphoribosyltransferase.